The following is a 402-amino-acid chain: CCA-adding enzyme (402 aa).

Residues Gly32 and Arg35 each contribute to the ATP site. CTP contacts are provided by Gly32 and Arg35. Residues Asp45 and Asp47 each coordinate Mg(2+). The ATP site is built by Arg116, Asp159, Arg162, Arg165, and Arg168. Residues Arg116, Asp159, Arg162, Arg165, and Arg168 each contribute to the CTP site.

Belongs to the tRNA nucleotidyltransferase/poly(A) polymerase family. Bacterial CCA-adding enzyme type 3 subfamily. As to quaternary structure, homodimer. The cofactor is Mg(2+).

It carries out the reaction a tRNA precursor + 2 CTP + ATP = a tRNA with a 3' CCA end + 3 diphosphate. It catalyses the reaction a tRNA with a 3' CCA end + 2 CTP + ATP = a tRNA with a 3' CCACCA end + 3 diphosphate. Functionally, catalyzes the addition and repair of the essential 3'-terminal CCA sequence in tRNAs without using a nucleic acid template. Adds these three nucleotides in the order of C, C, and A to the tRNA nucleotide-73, using CTP and ATP as substrates and producing inorganic pyrophosphate. tRNA 3'-terminal CCA addition is required both for tRNA processing and repair. Also involved in tRNA surveillance by mediating tandem CCA addition to generate a CCACCA at the 3' terminus of unstable tRNAs. While stable tRNAs receive only 3'-terminal CCA, unstable tRNAs are marked with CCACCA and rapidly degraded. This chain is CCA-adding enzyme, found in Streptococcus pyogenes serotype M6 (strain ATCC BAA-946 / MGAS10394).